We begin with the raw amino-acid sequence, 250 residues long: tRNA (guanine-N(1)-)-methyltransferase (250 aa).

S-adenosyl-L-methionine-binding positions include Gly113 and 133–138 (IGDYVL).

The protein belongs to the RNA methyltransferase TrmD family. As to quaternary structure, homodimer.

It is found in the cytoplasm. It catalyses the reaction guanosine(37) in tRNA + S-adenosyl-L-methionine = N(1)-methylguanosine(37) in tRNA + S-adenosyl-L-homocysteine + H(+). Its function is as follows. Specifically methylates guanosine-37 in various tRNAs. The chain is tRNA (guanine-N(1)-)-methyltransferase from Shewanella amazonensis (strain ATCC BAA-1098 / SB2B).